The following is a 398-amino-acid chain: NADH-quinone oxidoreductase subunit D (398 aa).

Belongs to the complex I 49 kDa subunit family. In terms of assembly, NDH-1 is composed of 14 different subunits. Subunits NuoB, C, D, E, F, and G constitute the peripheral sector of the complex.

It localises to the cell inner membrane. It catalyses the reaction a quinone + NADH + 5 H(+)(in) = a quinol + NAD(+) + 4 H(+)(out). In terms of biological role, NDH-1 shuttles electrons from NADH, via FMN and iron-sulfur (Fe-S) centers, to quinones in the respiratory chain. The immediate electron acceptor for the enzyme in this species is believed to be ubiquinone. Couples the redox reaction to proton translocation (for every two electrons transferred, four hydrogen ions are translocated across the cytoplasmic membrane), and thus conserves the redox energy in a proton gradient. The protein is NADH-quinone oxidoreductase subunit D of Bradyrhizobium sp. (strain BTAi1 / ATCC BAA-1182).